The following is a 284-amino-acid chain: Pantothenate synthetase (284 aa).

30–37 provides a ligand contact to ATP; sequence MGNLHDGH. Histidine 37 functions as the Proton donor in the catalytic mechanism. A (R)-pantoate-binding site is contributed by glutamine 61. Glutamine 61 is a beta-alanine binding site. Residue 149 to 152 coordinates ATP; it reads GEKD. Residue glutamine 155 coordinates (R)-pantoate. Residues valine 178 and 186–189 contribute to the ATP site; that span reads LSSR.

Belongs to the pantothenate synthetase family. In terms of assembly, homodimer.

The protein localises to the cytoplasm. It carries out the reaction (R)-pantoate + beta-alanine + ATP = (R)-pantothenate + AMP + diphosphate + H(+). It functions in the pathway cofactor biosynthesis; (R)-pantothenate biosynthesis; (R)-pantothenate from (R)-pantoate and beta-alanine: step 1/1. Functionally, catalyzes the condensation of pantoate with beta-alanine in an ATP-dependent reaction via a pantoyl-adenylate intermediate. The chain is Pantothenate synthetase from Klebsiella pneumoniae (strain 342).